Consider the following 23-residue polypeptide: Basic phospholipase A2 CB2 (23 aa).

Requires Ca(2+) as cofactor. In terms of processing, contains 7 disulfide bonds. As to expression, expressed by the venom gland.

It is found in the secreted. It catalyses the reaction a 1,2-diacyl-sn-glycero-3-phosphocholine + H2O = a 1-acyl-sn-glycero-3-phosphocholine + a fatty acid + H(+). Functionally, snake venom phospholipase A2 (PLA2) that shows presynaptic neurotoxicity. PLA2 catalyzes the calcium-dependent hydrolysis of the 2-acyl groups in 3-sn-phosphoglycerides. This is Basic phospholipase A2 CB2 from Crotalus durissus cumanensis (South American rattlesnake).